The primary structure comprises 702 residues: Solute carrier organic anion transporter family member 1B3 (702 aa).

The Cytoplasmic portion of the chain corresponds to 1 to 28 (MDQHQHLNKTAESASSEKKKTRRCNGFK). A helical transmembrane segment spans residues 29 to 48 (MFLAALSFSYIAKALGGIIM). At 49–67 (KISITQIERRFDISSSLAG) the chain is on the extracellular side. Residues 68 to 88 (LIDGSFEIGNLLVIVFVSYFG) form a helical membrane-spanning segment. The Cytoplasmic segment spans residues 89–94 (SKLHRP). The chain crosses the membrane as a helical span at residues 95-119 (KLIGIGCLLMGTGSILTSLPHFFMG). The Extracellular portion of the chain corresponds to 120-168 (YYRYSKETHINPSENSTSSLSTCLINQTLSFNGTSPEIVEKDCVKESGS). N134, N145, and N151 each carry an N-linked (GlcNAc...) asparagine glycan. The chain crosses the membrane as a helical span at residues 169–197 (HMWIYVFMGNMLRGIGETPIVPLGISYID). At 198–216 (DFAKEGHSSLYLGSLNAIG) the chain is on the cytoplasmic side. A helical membrane pass occupies residues 217–237 (MIGPVIGFALGSLFAKMYVDI). The Extracellular segment spans residues 238–255 (GYVDLSTIRITPKDSRWV). The chain crosses the membrane as a helical span at residues 256–280 (GAWWLGFLVSGLFSIISSIPFFFLP). Over 281 to 331 (KNPNKPQKERKISLSLHVLKTNDDRNQTANLTNQGKNVTKNVTGFFQSLKS) the chain is Cytoplasmic. A phosphoserine mark is found at S293 and S295. A helical transmembrane segment spans residues 332–353 (ILTNPLYVIFLLLTLLQVSSFI). Over 354–373 (GSFTYVFKYMEQQYGQSASH) the chain is Extracellular. A helical membrane pass occupies residues 374–397 (ANFLLGIITIPTVATGMFLGGFII). Topologically, residues 398 to 401 (KKFK) are cytoplasmic. The helical transmembrane segment at 402 to 425 (LSLVGIAKFSFLTSMISFLFQLLY) threads the bilayer. The Extracellular portion of the chain corresponds to 426 to 537 (FPLICESKSV…NTCTRKFFIY (112 aa)). The N-linked (GlcNAc...) asparagine glycan is linked to N445. The region spanning 453 to 508 (DVPLSYCNSECNCDESQWEPVCGNNGITYLSPCLAGCKSSSGIKKHTVFYNCSCVE) is the Kazal-like domain. Disulfide bonds link C459–C489, C465–C485, and C474–C506. 2 N-linked (GlcNAc...) asparagine glycosylation sites follow: N503 and N516. A helical transmembrane segment spans residues 538–560 (VAIQVINSLFSATGGTTFILLTV). Residues 561–569 (KIVQPELKA) lie on the Cytoplasmic side of the membrane. A helical membrane pass occupies residues 570–595 (LAMGFQSMVIRTLGGILAPIYFGALI). The Extracellular segment spans residues 596 to 629 (DKTCMKWSTNSCGAQGACRIYNSVFFGRVYLGLS). The helical transmembrane segment at 630-647 (IALRFPALVLYIVFIFAM) threads the bilayer. Topologically, residues 648-695 (KKKFQGKDTKASDNERKVMDEANLEFLNNGEHFVPSAGTDSKTCNLDM) are cytoplasmic. S683 carries the post-translational modification Phosphoserine.

The protein belongs to the organo anion transporter (TC 2.A.60) family. Post-translationally, N-glycosylated. As to expression, highly expressed in liver, in particular at the basolateral membrane of hepatocytes near the central vein. Expressed in the placenta. In testis, primarily localized to the basal membrane of Sertoli cells and weakly expressed in Leydig cells and within the tubules.

Its subcellular location is the basolateral cell membrane. The protein localises to the basal cell membrane. The enzyme catalyses estrone 3-sulfate(out) + hydrogencarbonate(in) = estrone 3-sulfate(in) + hydrogencarbonate(out). It carries out the reaction 17beta-estradiol 17-O-(beta-D-glucuronate)(out) = 17beta-estradiol 17-O-(beta-D-glucuronate)(in). The catalysed reaction is taurocholate(out) = taurocholate(in). It catalyses the reaction estrone 3-sulfate(out) = estrone 3-sulfate(in). The enzyme catalyses dehydroepiandrosterone 3-sulfate(out) = dehydroepiandrosterone 3-sulfate(in). It carries out the reaction leukotriene C4(out) = leukotriene C4(in). The catalysed reaction is L-thyroxine(out) = L-thyroxine(in). It catalyses the reaction prostaglandin E2(out) = prostaglandin E2(in). The enzyme catalyses (4E,15E)-bilirubin IXalpha C8-beta-D-glucuronoside(out) = (4E,15E)-bilirubin IXalpha C8-beta-D-glucuronoside(in). It carries out the reaction bilirubin IXalpha bis-beta-D-glucuronoside(out) = bilirubin IXalpha bis-beta-D-glucuronoside(in). In terms of biological role, mediates the Na(+)-independent uptake of organic anions. Shows broad substrate specificity, can transport both organic anions such as bile acid taurocholate (cholyltaurine) and conjugated steroids (17-beta-glucuronosyl estradiol, dehydroepiandrosterone sulfate (DHEAS), and estrone 3-sulfate), as well as eicosanoid leukotriene C4, prostaglandin E2 and L-thyroxine (T4). Hydrogencarbonate/HCO3(-) acts as the probable counteranion that exchanges for organic anions. Shows a pH-sensitive substrate specificity towards sulfated steroids, taurocholate and T4 which may be ascribed to the protonation state of the binding site and leads to a stimulation of substrate transport in an acidic microenvironment. Involved in the clearance of bile acids and organic anions from the liver. Can take up bilirubin glucuronides from plasma into the liver, contributing to the detoxification-enhancing liver-blood shuttling loop. Transports coproporphyrin I and III, by-products of heme synthesis, and may be involved in their hepatic disposition. May contribute to regulate the transport of organic compounds in testes across the blood-testis-barrier. Can transport HMG-CoA reductase inhibitors (also known as statins) such as pitavastatin, a clinically important class of hypolipidemic drugs. May play an important role in plasma and tissue distribution of the structurally diverse chemotherapeutic drugs methotrexate and paclitaxel. May also transport antihypertension agents, such as the angiotensin-converting enzyme (ACE) inhibitor prodrug enalapril, and the highly selective angiotensin II AT1-receptor antagonist valsartan, in the liver. This is Solute carrier organic anion transporter family member 1B3 (SLCO1B3) from Homo sapiens (Human).